Consider the following 530-residue polypeptide: Proline--tRNA ligase, cytoplasmic (530 aa).

The protein belongs to the class-II aminoacyl-tRNA synthetase family.

It is found in the cytoplasm. Its subcellular location is the cytosol. The enzyme catalyses tRNA(Pro) + L-proline + ATP = L-prolyl-tRNA(Pro) + AMP + diphosphate. Its function is as follows. Catalyzes the attachment of proline to tRNA(Pro) in a two-step reaction: proline is first activated by ATP to form Pro-AMP and then transferred to the acceptor end of tRNA(Pro). The chain is Proline--tRNA ligase, cytoplasmic from Arabidopsis thaliana (Mouse-ear cress).